The sequence spans 338 residues: Ferredoxin--NADP reductase (338 aa).

7 residues coordinate FAD: Asp38, Gln46, Tyr51, Val91, Phe125, Asp291, and Thr331.

Belongs to the ferredoxin--NADP reductase type 2 family. Homodimer. Requires FAD as cofactor.

The catalysed reaction is 2 reduced [2Fe-2S]-[ferredoxin] + NADP(+) + H(+) = 2 oxidized [2Fe-2S]-[ferredoxin] + NADPH. The chain is Ferredoxin--NADP reductase from Orientia tsutsugamushi (strain Ikeda) (Rickettsia tsutsugamushi).